Here is a 429-residue protein sequence, read N- to C-terminus: Adenylosuccinate synthetase (429 aa).

GTP is bound by residues 12–18 and 40–42; these read GDEGKGK and GHT. D13 acts as the Proton acceptor in catalysis. Mg(2+)-binding residues include D13 and G40. Residues 13-16, 38-41, T128, R142, Q223, T238, and R302 contribute to the IMP site; these read DEGK and NAGH. The active-site Proton donor is the H41. Substrate is bound at residue 298–304; that stretch reads TVTGRPR. GTP-binding positions include R304, 330 to 332, and 412 to 414; these read LLD and SVG.

Belongs to the adenylosuccinate synthetase family. In terms of assembly, homodimer. Mg(2+) is required as a cofactor.

Its subcellular location is the cytoplasm. It carries out the reaction IMP + L-aspartate + GTP = N(6)-(1,2-dicarboxyethyl)-AMP + GDP + phosphate + 2 H(+). The protein operates within purine metabolism; AMP biosynthesis via de novo pathway; AMP from IMP: step 1/2. Plays an important role in the de novo pathway of purine nucleotide biosynthesis. Catalyzes the first committed step in the biosynthesis of AMP from IMP. In Lactobacillus johnsonii (strain CNCM I-12250 / La1 / NCC 533), this protein is Adenylosuccinate synthetase.